The following is a 224-amino-acid chain: MTKKICIAIDGPAAAGKSTVAKIVAKKLRFVYIDTGAMYRAVTYIALKNNIAYEDEKGIAALLQKTVIRFEPGEIQQVFVGNENVTEVIRSLEITNHVSIVAAHPSIREALQERQQVFATEGGIVMDGRDIGTAVLPNAELKIFLLASVEERAERRYKENMAKGFAGDLDQLKKEIEERDHLDYTRTHSPLKKADDAIEVDTTSMSIDEVANKILSLAELKINN.

Position 11-19 (glycine 11–threonine 19) interacts with ATP.

This sequence belongs to the cytidylate kinase family. Type 1 subfamily.

Its subcellular location is the cytoplasm. The catalysed reaction is CMP + ATP = CDP + ADP. It carries out the reaction dCMP + ATP = dCDP + ADP. This Listeria monocytogenes serotype 4a (strain HCC23) protein is Cytidylate kinase.